A 405-amino-acid polypeptide reads, in one-letter code: ATP phosphoribosyltransferase regulatory subunit (405 aa).

This sequence belongs to the class-II aminoacyl-tRNA synthetase family. HisZ subfamily. As to quaternary structure, heteromultimer composed of HisG and HisZ subunits.

It is found in the cytoplasm. Its pathway is amino-acid biosynthesis; L-histidine biosynthesis; L-histidine from 5-phospho-alpha-D-ribose 1-diphosphate: step 1/9. In terms of biological role, required for the first step of histidine biosynthesis. May allow the feedback regulation of ATP phosphoribosyltransferase activity by histidine. The sequence is that of ATP phosphoribosyltransferase regulatory subunit from Microcystis aeruginosa (strain NIES-843 / IAM M-2473).